The chain runs to 157 residues: Transcriptional repressor NrdR (157 aa).

Positions 1–21 are disordered; the sequence is MKCPHCGNNGSRVVDSRPTDE. A zinc finger lies at 3–34; sequence CPHCGNNGSRVVDSRPTDEGRVIRRRRECEKC. One can recognise an ATP-cone domain in the interval 49-139; it reads LLVIKKNGSR…VYRQFKDMHV (91 aa).

This sequence belongs to the NrdR family. Zn(2+) is required as a cofactor.

Negatively regulates transcription of bacterial ribonucleotide reductase nrd genes and operons by binding to NrdR-boxes. The chain is Transcriptional repressor NrdR from Pediococcus pentosaceus (strain ATCC 25745 / CCUG 21536 / LMG 10740 / 183-1w).